A 171-amino-acid chain; its full sequence is UPF0398 protein MGAS10270_Spy1470 (171 aa).

This sequence belongs to the UPF0398 family.

The protein is UPF0398 protein MGAS10270_Spy1470 of Streptococcus pyogenes serotype M2 (strain MGAS10270).